A 655-amino-acid chain; its full sequence is Import motor subunit, mitochondrial (655 aa).

Residues 1-23 constitute a mitochondrion transit peptide; that stretch reads MLAAKNILNRSSLSSSFRIATRL. Residue T330 is modified to Phosphothreonine. Residues 629-655 are disordered; it reads EQLYKNDSNNNNNNNNGNNAESDETKQ. Over residues 637-647 the composition is skewed to low complexity; it reads NNNNNNNNGNN.

It belongs to the heat shock protein 70 family. As to quaternary structure, component of the PAM complex, at least composed of SSC1 (mtHsp70), MGE1, TIM44, PAM16/TIM16, PAM17 and PAM18/TIM14. In the complex, SSC1 interacts directly with PAM18 and TIM44. Interacts with NAP1. Component of endonuclease SceI (endo.SceI), which is a heterodimer of ENS2 and SSC1.

The protein localises to the mitochondrion matrix. The catalysed reaction is ATP + H2O = ADP + phosphate + H(+). Its function is as follows. Essential component of the PAM complex, a complex required for the translocation of transit peptide-containing proteins from the inner membrane into the mitochondrial matrix in an ATP-dependent manner. Constitutes the ATP-driven core of the motor and binds the precursor preprotein. Required for the import of the processed frataxin homolog YFH1 into the mitochondrion. In terms of biological role, acts as a non-catalytic component of endonuclease SceI (endo.SceI), which cleaves specifically at multiple sites on mitochondrial DNA and produces double-stranded breaks. SSC1 confers broader sequence specificity, greater stability, and higher activity on the catalytic subunit. This Saccharomyces cerevisiae (Baker's yeast) protein is Import motor subunit, mitochondrial.